The sequence spans 585 residues: Archaeosine synthase (585 aa).

The 69-residue stretch at 516-584 (TKTVEIDGFV…IGVEIRHVEE (69 aa)) folds into the PUA domain.

The protein belongs to the archaeosine synthase type 1 family. Homodimer.

The enzyme catalyses 7-cyano-7-carbaguanosine(15) in tRNA + L-glutamine + H2O = archaeosine(15) in tRNA + L-glutamate. The protein operates within tRNA modification; archaeosine-tRNA biosynthesis. Functionally, is responsible for the final step in the biosynthesis of archaeosine, a modified nucleoside present in the dihydrouridine loop (D-loop) of archaeal tRNA. Catalyzes the conversion of 7-cyano-7-deazaguanine (preQ0)-modified tRNA to archaeosine-tRNA, transforming a nitrile group to a formamidine group. In Haloferax volcanii (strain ATCC 29605 / DSM 3757 / JCM 8879 / NBRC 14742 / NCIMB 2012 / VKM B-1768 / DS2) (Halobacterium volcanii), this protein is Archaeosine synthase.